The following is a 194-amino-acid chain: NADH-quinone oxidoreductase subunit B (194 aa).

Polar residues predominate over residues 1 to 11; the sequence is MGMSQNNSTLV. The disordered stretch occupies residues 1-22; it reads MGMSQNNSTLVAPQPKGIIDPA. Positions 72, 73, 138, and 168 each coordinate [4Fe-4S] cluster.

This sequence belongs to the complex I 20 kDa subunit family. As to quaternary structure, NDH-1 is composed of 14 different subunits. Subunits NuoB, C, D, E, F, and G constitute the peripheral sector of the complex. Requires [4Fe-4S] cluster as cofactor.

It is found in the cell inner membrane. It carries out the reaction a quinone + NADH + 5 H(+)(in) = a quinol + NAD(+) + 4 H(+)(out). Its function is as follows. NDH-1 shuttles electrons from NADH, via FMN and iron-sulfur (Fe-S) centers, to quinones in the respiratory chain. The immediate electron acceptor for the enzyme in this species is believed to be ubiquinone. Couples the redox reaction to proton translocation (for every two electrons transferred, four hydrogen ions are translocated across the cytoplasmic membrane), and thus conserves the redox energy in a proton gradient. The sequence is that of NADH-quinone oxidoreductase subunit B from Agrobacterium fabrum (strain C58 / ATCC 33970) (Agrobacterium tumefaciens (strain C58)).